A 306-amino-acid chain; its full sequence is Bifunctional protein FolD (306 aa).

Residues 166–168 (GRS) and isoleucine 232 contribute to the NADP(+) site.

The protein belongs to the tetrahydrofolate dehydrogenase/cyclohydrolase family. As to quaternary structure, homodimer.

It carries out the reaction (6R)-5,10-methylene-5,6,7,8-tetrahydrofolate + NADP(+) = (6R)-5,10-methenyltetrahydrofolate + NADPH. It catalyses the reaction (6R)-5,10-methenyltetrahydrofolate + H2O = (6R)-10-formyltetrahydrofolate + H(+). The protein operates within one-carbon metabolism; tetrahydrofolate interconversion. Catalyzes the oxidation of 5,10-methylenetetrahydrofolate to 5,10-methenyltetrahydrofolate and then the hydrolysis of 5,10-methenyltetrahydrofolate to 10-formyltetrahydrofolate. The chain is Bifunctional protein FolD from Methylorubrum extorquens (strain CM4 / NCIMB 13688) (Methylobacterium extorquens).